We begin with the raw amino-acid sequence, 323 residues long: ADP-L-glycero-D-manno-heptose-6-epimerase (323 aa).

NADP(+) is bound by residues 10 to 11 (FI), 31 to 32 (DN), Lys-38, Lys-53, 75 to 79 (EGACS), and Asn-92. Tyr-139 functions as the Proton acceptor in the catalytic mechanism. Lys-143 provides a ligand contact to NADP(+). Asn-168 contributes to the substrate binding site. Val-169 and Lys-177 together coordinate NADP(+). Lys-177 serves as the catalytic Proton acceptor. Residues Asp-179, Lys-186, 200-203 (FGAY), Arg-213, and Tyr-277 each bind substrate.

Belongs to the NAD(P)-dependent epimerase/dehydratase family. HldD subfamily. In terms of assembly, homopentamer. NADP(+) is required as a cofactor.

It carries out the reaction ADP-D-glycero-beta-D-manno-heptose = ADP-L-glycero-beta-D-manno-heptose. It participates in nucleotide-sugar biosynthesis; ADP-L-glycero-beta-D-manno-heptose biosynthesis; ADP-L-glycero-beta-D-manno-heptose from D-glycero-beta-D-manno-heptose 7-phosphate: step 4/4. Catalyzes the interconversion between ADP-D-glycero-beta-D-manno-heptose and ADP-L-glycero-beta-D-manno-heptose via an epimerization at carbon 6 of the heptose. In Hydrogenovibrio crunogenus (strain DSM 25203 / XCL-2) (Thiomicrospira crunogena), this protein is ADP-L-glycero-D-manno-heptose-6-epimerase.